The primary structure comprises 156 residues: SsrA-binding protein (156 aa).

The protein belongs to the SmpB family.

It localises to the cytoplasm. Required for rescue of stalled ribosomes mediated by trans-translation. Binds to transfer-messenger RNA (tmRNA), required for stable association of tmRNA with ribosomes. tmRNA and SmpB together mimic tRNA shape, replacing the anticodon stem-loop with SmpB. tmRNA is encoded by the ssrA gene; the 2 termini fold to resemble tRNA(Ala) and it encodes a 'tag peptide', a short internal open reading frame. During trans-translation Ala-aminoacylated tmRNA acts like a tRNA, entering the A-site of stalled ribosomes, displacing the stalled mRNA. The ribosome then switches to translate the ORF on the tmRNA; the nascent peptide is terminated with the 'tag peptide' encoded by the tmRNA and targeted for degradation. The ribosome is freed to recommence translation, which seems to be the essential function of trans-translation. This Lactiplantibacillus plantarum (strain ATCC BAA-793 / NCIMB 8826 / WCFS1) (Lactobacillus plantarum) protein is SsrA-binding protein.